Consider the following 385-residue polypeptide: S-adenosylmethionine synthase (385 aa).

His16 serves as a coordination point for ATP. Asp18 contacts Mg(2+). K(+) is bound at residue Glu44. Residues Glu57 and Gln100 each coordinate L-methionine. The segment at 100 to 110 (QSPDINQGVDR) is flexible loop. ATP contacts are provided by residues 164 to 166 (DGK), 230 to 231 (KF), Asp239, 245 to 246 (RK), Ala262, and Lys266. Asp239 is an L-methionine binding site. Lys270 contacts L-methionine.

It belongs to the AdoMet synthase family. As to quaternary structure, homotetramer; dimer of dimers. The cofactor is Mg(2+). K(+) serves as cofactor.

The protein resides in the cytoplasm. It carries out the reaction L-methionine + ATP + H2O = S-adenosyl-L-methionine + phosphate + diphosphate. The protein operates within amino-acid biosynthesis; S-adenosyl-L-methionine biosynthesis; S-adenosyl-L-methionine from L-methionine: step 1/1. Catalyzes the formation of S-adenosylmethionine (AdoMet) from methionine and ATP. The overall synthetic reaction is composed of two sequential steps, AdoMet formation and the subsequent tripolyphosphate hydrolysis which occurs prior to release of AdoMet from the enzyme. The chain is S-adenosylmethionine synthase from Helicobacter pylori (strain J99 / ATCC 700824) (Campylobacter pylori J99).